The following is a 212-amino-acid chain: Inner membrane-spanning protein YciB (212 aa).

A run of 6 helical transmembrane segments spans residues 19 to 39, 47 to 67, 82 to 102, 105 to 122, 147 to 167, and 177 to 197; these read FYGA…PVAL, AIYL…ALGL, AVIL…FILW, TLVN…PLFG, LAWV…AYTF, and LFGM…YLGL.

The protein belongs to the YciB family.

It localises to the cell inner membrane. In terms of biological role, plays a role in cell envelope biogenesis, maintenance of cell envelope integrity and membrane homeostasis. This is Inner membrane-spanning protein YciB from Thioalkalivibrio sulfidiphilus (strain HL-EbGR7).